Consider the following 389-residue polypeptide: MKNDINYFTSESVSEGHPDKLCDQISDAVLDACLRDDPESHVACETFASTALVLVGGEITTNTYVDIQEIARSIAEEIGYTNTDFGLDCHSMAVMNMIHSQSPDISQGVDGTGLDEYKGQQGAGDQGMMFGFACKETPELMPAPIMFSHSVLRYAAKLRKEKVIPWLRPDSKTQITVKYEGFKPIKIDTVVLSHQHYPDVQYDELKDTLINRVIKPVLGPTGLLADDTKYFINPTGRFVIGGPFGDTGLTGRKIIVDTYGGMGRHGGGAFSGKDPSKVDRSAAYMARYIAKNVVAADLARRCEVQLAYAIGVPFPVAVRVDTFGTGEVPEEKIEKAIKEVFDMSPAGIIKTLDLKRPIYKETAAYGHFGRPEFSWEKTDKTEALKKAIK.

His17 is an ATP binding site. Residue Asp19 coordinates Mg(2+). A K(+)-binding site is contributed by Glu45. L-methionine contacts are provided by Glu58 and Gln101. Residues 101 to 111 (QSPDISQGVDG) form a flexible loop region. ATP is bound by residues 170–172 (DSK), 237–238 (RF), Asp246, 252–253 (RK), Ala269, and Lys273. Residue Asp246 coordinates L-methionine. Position 277 (Lys277) interacts with L-methionine.

Belongs to the AdoMet synthase family. As to quaternary structure, homotetramer; dimer of dimers. The cofactor is Mg(2+). K(+) is required as a cofactor.

Its subcellular location is the cytoplasm. The enzyme catalyses L-methionine + ATP + H2O = S-adenosyl-L-methionine + phosphate + diphosphate. Its pathway is amino-acid biosynthesis; S-adenosyl-L-methionine biosynthesis; S-adenosyl-L-methionine from L-methionine: step 1/1. Functionally, catalyzes the formation of S-adenosylmethionine (AdoMet) from methionine and ATP. The overall synthetic reaction is composed of two sequential steps, AdoMet formation and the subsequent tripolyphosphate hydrolysis which occurs prior to release of AdoMet from the enzyme. This is S-adenosylmethionine synthase from Treponema denticola (strain ATCC 35405 / DSM 14222 / CIP 103919 / JCM 8153 / KCTC 15104).